Here is a 202-residue protein sequence, read N- to C-terminus: Small ribosomal subunit protein uS4c (202 aa).

The S4 RNA-binding domain occupies Met90–Ile153.

Belongs to the universal ribosomal protein uS4 family. Part of the 30S ribosomal subunit. Contacts protein S5. The interaction surface between S4 and S5 is involved in control of translational fidelity.

The protein resides in the plastid. The protein localises to the chloroplast. Its function is as follows. One of the primary rRNA binding proteins, it binds directly to 16S rRNA where it nucleates assembly of the body of the 30S subunit. Functionally, with S5 and S12 plays an important role in translational accuracy. This chain is Small ribosomal subunit protein uS4c (rps4), found in Leucodon sciuroides (Moss).